The sequence spans 273 residues: 4-hydroxy-tetrahydrodipicolinate reductase (273 aa).

NAD(+)-binding positions include 12-17 and E38; that span reads GAGGRM. R39 serves as a coordination point for NADP(+). NAD(+) contacts are provided by residues 102–104 and 126–129; these read GTT and AANF. H159 serves as the catalytic Proton donor/acceptor. H160 lines the (S)-2,3,4,5-tetrahydrodipicolinate pocket. K163 functions as the Proton donor in the catalytic mechanism. 169–170 is a (S)-2,3,4,5-tetrahydrodipicolinate binding site; the sequence is GT.

This sequence belongs to the DapB family. Homotetramer.

It is found in the cytoplasm. The catalysed reaction is (S)-2,3,4,5-tetrahydrodipicolinate + NAD(+) + H2O = (2S,4S)-4-hydroxy-2,3,4,5-tetrahydrodipicolinate + NADH + H(+). The enzyme catalyses (S)-2,3,4,5-tetrahydrodipicolinate + NADP(+) + H2O = (2S,4S)-4-hydroxy-2,3,4,5-tetrahydrodipicolinate + NADPH + H(+). It participates in amino-acid biosynthesis; L-lysine biosynthesis via DAP pathway; (S)-tetrahydrodipicolinate from L-aspartate: step 4/4. Catalyzes the conversion of 4-hydroxy-tetrahydrodipicolinate (HTPA) to tetrahydrodipicolinate. The polypeptide is 4-hydroxy-tetrahydrodipicolinate reductase (Photorhabdus laumondii subsp. laumondii (strain DSM 15139 / CIP 105565 / TT01) (Photorhabdus luminescens subsp. laumondii)).